The primary structure comprises 284 residues: MVAACSAYAAVNVATQWAGTRTGIPSVIIAFWQYVIALVLTLPLLVRDGTRALRTSHFGLHVMRVALAAAGVQVWIYALTHVPIWQVVALSMTSPFFVILCARLFLQEKVTPARLLTTFTGFIGALIIIAPWSDSYTVYSLLPILAAALWAGYSVMTKYLTRFEKPASISAYMLVLLTPINAALWLASGLSMSAITAPDVEIWSILIVIGAFTALAQYFQTAAYSIADAVYLQPFDDLRLPINVIFGWIVFAAAPSINFWPGAALIIGASLYLMRQDSGTSRTA.

EamA domains lie at 2–129 (VAAC…LIII) and 141–273 (LLPI…SLYL). The next 8 membrane-spanning stretches (helical) occupy residues 26–46 (SVIIAFWQYVIALVLTLPLLV), 58–78 (FGLHVMRVALAAAGVQVWIYA), 82–102 (VPIWQVVALSMTSPFFVILCA), 115–135 (LLTTFTGFIGALIIIAPWSDS), 136–156 (YTVYSLLPILAAALWAGYSVM), 167–187 (ASISAYMLVLLTPINAALWLA), 195–215 (ITAPDVEIWSILIVIGAFTAL), and 247–267 (GWIVFAAAPSINFWPGAALII).

It belongs to the drug/metabolite transporter (DMT) superfamily. 10 TMS drug/metabolite exporter (DME) (TC 2.A.7.3) family.

The protein localises to the cell membrane. Transports riboflavin into the cell. This Brucella anthropi (strain ATCC 49188 / DSM 6882 / CCUG 24695 / JCM 21032 / LMG 3331 / NBRC 15819 / NCTC 12168 / Alc 37) (Ochrobactrum anthropi) protein is Riboflavin transporter.